Consider the following 367-residue polypeptide: Phospho-N-acetylmuramoyl-pentapeptide-transferase (367 aa).

Helical transmembrane passes span 30–50 (AAAI…IALL), 71–91 (LPTM…LLWA), 94–114 (TDPH…IGFI), 138–158 (ISLG…SVLM), 169–189 (LTID…TALS), 200–220 (GLAA…AYLA), 237–257 (GGEI…FLWF), 264–284 (IIMG…TALL), 289–309 (LLLP…SLQV), and 344–364 (KIVI…LMTL).

Belongs to the glycosyltransferase 4 family. MraY subfamily. Mg(2+) serves as cofactor.

It localises to the cell inner membrane. The catalysed reaction is UDP-N-acetyl-alpha-D-muramoyl-L-alanyl-gamma-D-glutamyl-meso-2,6-diaminopimeloyl-D-alanyl-D-alanine + di-trans,octa-cis-undecaprenyl phosphate = di-trans,octa-cis-undecaprenyl diphospho-N-acetyl-alpha-D-muramoyl-L-alanyl-D-glutamyl-meso-2,6-diaminopimeloyl-D-alanyl-D-alanine + UMP. It functions in the pathway cell wall biogenesis; peptidoglycan biosynthesis. Catalyzes the initial step of the lipid cycle reactions in the biosynthesis of the cell wall peptidoglycan: transfers peptidoglycan precursor phospho-MurNAc-pentapeptide from UDP-MurNAc-pentapeptide onto the lipid carrier undecaprenyl phosphate, yielding undecaprenyl-pyrophosphoryl-MurNAc-pentapeptide, known as lipid I. In Chlorobium phaeovibrioides (strain DSM 265 / 1930) (Prosthecochloris vibrioformis (strain DSM 265)), this protein is Phospho-N-acetylmuramoyl-pentapeptide-transferase.